We begin with the raw amino-acid sequence, 104 residues long: Zinc-containing ferredoxin-2 (104 aa).

Residues 2-37 (GIDPNYRQNRQVVGEHEGHKIYGPVEPPGKLGIHGT) are N-terminal extension. Histidine 17, histidine 20, and histidine 35 together coordinate Zn(2+). 4Fe-4S ferredoxin-type domains follow at residues 38–66 (IVGVDFDVCIADGSCINACPVNVFQWFDT) and 75–104 (KADPINEKACIFCMACVNVCPVAAIDVKPP). Positions 46 and 52 each coordinate [3Fe-4S] cluster. Cysteine 56 contributes to the [4Fe-4S] cluster binding site. Aspartate 77 is a binding site for Zn(2+). The [4Fe-4S] cluster site is built by cysteine 84, cysteine 87, and cysteine 90. Cysteine 94 is a [3Fe-4S] cluster binding site.

Requires [3Fe-4S] cluster as cofactor. It depends on [4Fe-4S] cluster as a cofactor. Zn(2+) serves as cofactor.

In terms of biological role, ferredoxins are iron-sulfur proteins that transfer electrons in a wide variety of metabolic reactions. This Sulfurisphaera tokodaii (strain DSM 16993 / JCM 10545 / NBRC 100140 / 7) (Sulfolobus tokodaii) protein is Zinc-containing ferredoxin-2 (zfx2).